The following is a 322-amino-acid chain: uncharacterized protein (322 aa).

To M.jannaschii MJ0640 and MJ0799.

This is an uncharacterized protein from Synechocystis sp. (strain ATCC 27184 / PCC 6803 / Kazusa).